Consider the following 279-residue polypeptide: Tryptophan synthase alpha chain (279 aa).

Active-site proton acceptor residues include glutamate 63 and aspartate 74.

It belongs to the TrpA family. Tetramer of two alpha and two beta chains.

It carries out the reaction (1S,2R)-1-C-(indol-3-yl)glycerol 3-phosphate + L-serine = D-glyceraldehyde 3-phosphate + L-tryptophan + H2O. It participates in amino-acid biosynthesis; L-tryptophan biosynthesis; L-tryptophan from chorismate: step 5/5. In terms of biological role, the alpha subunit is responsible for the aldol cleavage of indoleglycerol phosphate to indole and glyceraldehyde 3-phosphate. The sequence is that of Tryptophan synthase alpha chain from Prochlorococcus marinus subsp. pastoris (strain CCMP1986 / NIES-2087 / MED4).